A 431-amino-acid chain; its full sequence is Enolase (431 aa).

Q162 contributes to the (2R)-2-phosphoglycerate binding site. E204 (proton donor) is an active-site residue. D241, E288, and D315 together coordinate Mg(2+). 4 residues coordinate (2R)-2-phosphoglycerate: K340, R369, S370, and K391. Residue K340 is the Proton acceptor of the active site.

This sequence belongs to the enolase family. It depends on Mg(2+) as a cofactor.

The protein localises to the cytoplasm. Its subcellular location is the secreted. The protein resides in the cell surface. The catalysed reaction is (2R)-2-phosphoglycerate = phosphoenolpyruvate + H2O. It participates in carbohydrate degradation; glycolysis; pyruvate from D-glyceraldehyde 3-phosphate: step 4/5. In terms of biological role, catalyzes the reversible conversion of 2-phosphoglycerate (2-PG) into phosphoenolpyruvate (PEP). It is essential for the degradation of carbohydrates via glycolysis. In Phocaeicola vulgatus (strain ATCC 8482 / DSM 1447 / JCM 5826 / CCUG 4940 / NBRC 14291 / NCTC 11154) (Bacteroides vulgatus), this protein is Enolase.